A 382-amino-acid polypeptide reads, in one-letter code: Flap endonuclease 1 (382 aa).

Residues 1 to 105 (MGIKGLNAII…HELTKRSSRR (105 aa)) form an N-domain region. Position 34 (Asp-34) interacts with Mg(2+). Residues Arg-47 and Arg-71 each contribute to the DNA site. Mg(2+) is bound by residues Asp-87, Glu-156, Glu-158, Asp-177, and Asp-179. The I-domain stretch occupies residues 120-251 (EKMKQERRLV…VTALKLIKTH (132 aa)). Glu-156 contributes to the DNA binding site. DNA-binding residues include Gly-229 and Asp-231. Asp-231 is a binding site for Mg(2+). The interaction with PCNA stretch occupies residues 339 to 347 (IQGRLDGFF). The disordered stretch occupies residues 358–382 (AAAAKRAQENKKLNKNKNKVTKGRR). The segment covering 370-382 (LNKNKNKVTKGRR) has biased composition (basic residues).

This sequence belongs to the XPG/RAD2 endonuclease family. FEN1 subfamily. Interacts with PCNA. Three molecules of RAD27 bind to one PCNA trimer with each molecule binding to one PCNA monomer. PCNA stimulates the nuclease activity without altering cleavage specificity. Mg(2+) serves as cofactor. Post-translationally, phosphorylated. Phosphorylation upon DNA damage induces relocalization to the nuclear plasma.

Its subcellular location is the nucleus. The protein resides in the nucleolus. The protein localises to the nucleoplasm. It localises to the mitochondrion. Functionally, structure-specific nuclease with 5'-flap endonuclease and 5'-3' exonuclease activities involved in DNA replication and repair. During DNA replication, cleaves the 5'-overhanging flap structure that is generated by displacement synthesis when DNA polymerase encounters the 5'-end of a downstream Okazaki fragment. It enters the flap from the 5'-end and then tracks to cleave the flap base, leaving a nick for ligation. Also involved in the long patch base excision repair (LP-BER) pathway, by cleaving within the apurinic/apyrimidinic (AP) site-terminated flap. Acts as a genome stabilization factor that prevents flaps from equilibrating into structures that lead to duplications and deletions. Also possesses 5'-3' exonuclease activity on nicked or gapped double-stranded DNA, and exhibits RNase H activity. Also involved in replication and repair of rDNA and in repairing mitochondrial DNA. This Saccharomyces cerevisiae (strain RM11-1a) (Baker's yeast) protein is Flap endonuclease 1.